A 236-amino-acid chain; its full sequence is Transcriptional activator protein SolR (236 aa).

The HTH luxR-type domain occupies 169-234; it reads VPESNAVLTT…QAVVKAIATG (66 aa). The segment at residues 193–212 is a DNA-binding region (H-T-H motif); sequence AYEIGQILRISERTVNFHVN.

It belongs to the autoinducer-regulated transcriptional regulatory protein family.

The protein is Transcriptional activator protein SolR (solR) of Ralstonia solanacearum (Pseudomonas solanacearum).